The following is a 436-amino-acid chain: T-box transcription factor T (436 aa).

Positions 51–219 form a DNA-binding region, T-box; sequence LWLRFKELTN…YNPFAKAFLD (169 aa).

In terms of assembly, monomer. Binds DNA as a monomer.

It is found in the nucleus. In terms of biological role, involved in the transcriptional regulation of genes required for mesoderm formation and differentiation. Binds to a palindromic T site 5'-TTCACACCTAGGTGTGAA-3' DNA sequence and activates gene transcription when bound to such a site. This Mus musculus (Mouse) protein is T-box transcription factor T.